A 220-amino-acid chain; its full sequence is UPF0319 protein YccT (220 aa).

A signal peptide spans 1 to 20; that stretch reads MKTGALTTFLALCLPVTVFA.

Belongs to the UPF0319 family.

This chain is UPF0319 protein YccT, found in Salmonella dublin (strain CT_02021853).